Consider the following 368-residue polypeptide: H-2 class I histocompatibility antigen, K-D alpha chain (368 aa).

A signal peptide spans 1-21 (MAPCTLLLLLAAALAPTQTRA). Residues 22–111 (GPHSLRYFVT…AQRYYNQSKG (90 aa)) form an alpha-1 region. Residues 22 to 305 (GPHSLRYFVT…KLPPSTVSNT (284 aa)) lie on the Extracellular side of the membrane. The N-linked (GlcNAc...) asparagine glycan is linked to Asn-107. The interval 112–203 (GSHTFQRMFG…ELGNETLLRT (92 aa)) is alpha-2. An intrachain disulfide couples Cys-122 to Cys-185. Asn-197 and Asn-277 each carry an N-linked (GlcNAc...) asparagine glycan. The interval 204–295 (DSPKAHVTYH…GLPEPLTLRW (92 aa)) is alpha-3. The Ig-like C1-type domain occupies 206 to 294 (PKAHVTYHPR…KGLPEPLTLR (89 aa)). Cys-224 and Cys-280 are oxidised to a cystine. The segment at 296-305 (KLPPSTVSNT) is connecting peptide. The chain crosses the membrane as a helical span at residues 306–328 (VIIAVLVVLGAAIVTGAVVAFVM). Over 329 to 368 (KMRRNTGGKGVNYALAPGSQTSDLSLPDGKVMVHDPHSLA) the chain is Cytoplasmic. Residues Ser-350 and Ser-353 each carry the phosphoserine modification.

It belongs to the MHC class I family. In terms of assembly, heterodimer of an alpha chain and a beta chain (beta-2-microglobulin).

Its subcellular location is the membrane. Functionally, involved in the presentation of foreign antigens to the immune system. This chain is H-2 class I histocompatibility antigen, K-D alpha chain (H2-K1), found in Mus musculus (Mouse).